We begin with the raw amino-acid sequence, 251 residues long: Imidazole glycerol phosphate synthase subunit HisF (251 aa).

Catalysis depends on residues aspartate 11 and aspartate 130.

It belongs to the HisA/HisF family. In terms of assembly, heterodimer of HisH and HisF.

It is found in the cytoplasm. It catalyses the reaction 5-[(5-phospho-1-deoxy-D-ribulos-1-ylimino)methylamino]-1-(5-phospho-beta-D-ribosyl)imidazole-4-carboxamide + L-glutamine = D-erythro-1-(imidazol-4-yl)glycerol 3-phosphate + 5-amino-1-(5-phospho-beta-D-ribosyl)imidazole-4-carboxamide + L-glutamate + H(+). The protein operates within amino-acid biosynthesis; L-histidine biosynthesis; L-histidine from 5-phospho-alpha-D-ribose 1-diphosphate: step 5/9. Functionally, IGPS catalyzes the conversion of PRFAR and glutamine to IGP, AICAR and glutamate. The HisF subunit catalyzes the cyclization activity that produces IGP and AICAR from PRFAR using the ammonia provided by the HisH subunit. The polypeptide is Imidazole glycerol phosphate synthase subunit HisF (Listeria monocytogenes serotype 4b (strain CLIP80459)).